The chain runs to 497 residues: MGLSWKERVFMALLGVAAASGLTMLVLILVKAINVLLPADTKFGIVFDAGSSHTSLFVYQWPANKEKDTGVVSQALTCQIEGPGISSYTSDPTQAGESLKSCLEEALALIPQAQHPETPTFLGSTAGMRLLSQKNSSQARDILAAVSQTLSKSPVDFWGAKILAGQDEGAFGWITINYVLGMLLKYSSGQWILPEEGMLVGALDLGGASTQISFVPQGPILDQSTQVTFRLYGANYSVYTHSYLCFGRDQILNRLLAKLAQDRLSSQVAPVRHPCYHSGYQAILPLSSLYDSPCIHTTDSLNHTQNLTVEGTGDPGNCVVALRSLFNFSSCKGQKDCAFNGIYQPPVHGQFYAFSNFYYTFHFLNLTSRQSLNTVNDTVWKFCQKPWKLVEVSYPGQERWLRDYCASGLYILVLLLEGYKFSEETWPNIQFQKQAGDTDIGWTLGFMLNLTGMIPAEAPTHWRAQSYSIWTAGVVFAVLTLVAILGAAAIQIFWTQD.

Over 1–8 the chain is Cytoplasmic; sequence MGLSWKER. The helical transmembrane segment at 9–29 threads the bilayer; that stretch reads VFMALLGVAAASGLTMLVLIL. Topologically, residues 30–473 are extracellular; that stretch reads VKAINVLLPA…AQSYSIWTAG (444 aa). A disulfide bridge links Cys78 with Cys102. The Proton acceptor role is filled by Glu168. A disulfide bridge links Cys245 with Cys294. Asn306 carries an N-linked (GlcNAc...) asparagine glycan. Cysteines 331 and 337 form a disulfide. N-linked (GlcNAc...) asparagine glycosylation is present at Asn365. The cysteines at positions 383 and 405 are disulfide-linked. The helical transmembrane segment at 474–494 threads the bilayer; that stretch reads VVFAVLTLVAILGAAAIQIFW. Residues 495 to 497 lie on the Cytoplasmic side of the membrane; that stretch reads TQD.

This sequence belongs to the GDA1/CD39 NTPase family. Ca(2+) is required as a cofactor. Requires Mg(2+) as cofactor. N-glycosylated. In terms of tissue distribution, expressed in liver, jejunum and kidney.

It localises to the cell membrane. It carries out the reaction a ribonucleoside 5'-triphosphate + 2 H2O = a ribonucleoside 5'-phosphate + 2 phosphate + 2 H(+). Functionally, canalicular ectonucleoside NTPDase responsible for the main hepatic NTPDase activity. Ectonucleoside NTPDases catalyze the hydrolysis of gamma- and beta-phosphate residues of nucleotides, playing a central role in concentration of extracellular nucleotides. Has activity toward ATP, ADP, UTP and UDP, but not toward AMP. The sequence is that of Ectonucleoside triphosphate diphosphohydrolase 8 (Entpd8) from Mus musculus (Mouse).